Consider the following 283-residue polypeptide: Thymidylate synthase (283 aa).

Arg-22 is a binding site for dUMP. Residue Cys-160 is the Nucleophile of the active site. Residues 180 to 183 (RSCD), Asn-191, and 221 to 223 (HIY) contribute to the dUMP site. Position 183 (Asp-183) interacts with (6R)-5,10-methylene-5,6,7,8-tetrahydrofolate. Ser-282 contributes to the (6R)-5,10-methylene-5,6,7,8-tetrahydrofolate binding site.

This sequence belongs to the thymidylate synthase family. Bacterial-type ThyA subfamily. In terms of assembly, homodimer.

The protein localises to the cytoplasm. The catalysed reaction is dUMP + (6R)-5,10-methylene-5,6,7,8-tetrahydrofolate = 7,8-dihydrofolate + dTMP. It functions in the pathway pyrimidine metabolism; dTTP biosynthesis. In terms of biological role, catalyzes the reductive methylation of 2'-deoxyuridine-5'-monophosphate (dUMP) to 2'-deoxythymidine-5'-monophosphate (dTMP) while utilizing 5,10-methylenetetrahydrofolate (mTHF) as the methyl donor and reductant in the reaction, yielding dihydrofolate (DHF) as a by-product. This enzymatic reaction provides an intracellular de novo source of dTMP, an essential precursor for DNA biosynthesis. In Pseudoalteromonas translucida (strain TAC 125), this protein is Thymidylate synthase.